The primary structure comprises 25 residues: Brevinin-2R (25 aa).

Cys-19 and Cys-25 are disulfide-bonded.

Belongs to the frog skin active peptide (FSAP) family. Brevinin subfamily. In terms of tissue distribution, expressed by the skin glands.

It localises to the secreted. Cytotoxic to cancer cells, acts via the activation of the lysosomal-mitochondrial death pathway and autophagy-like cell death. Does not show significant hemolytic activity. The polypeptide is Brevinin-2R (Pelophylax ridibundus (Marsh frog)).